A 395-amino-acid chain; its full sequence is Flap endonuclease 1 (395 aa).

Residues 1 to 104 are N-domain; sequence MGIKQLFQII…GELAKRFQRK (104 aa). Aspartate 34 contributes to the Mg(2+) binding site. The DNA site is built by arginine 47 and arginine 70. 5 residues coordinate Mg(2+): aspartate 86, glutamate 158, glutamate 160, aspartate 179, and aspartate 181. The segment at 122 to 253 is I-domain; it reads DIEKFSRRTV…TTALKLIRDH (132 aa). Glutamate 158 is a DNA binding site. 2 residues coordinate DNA: glycine 231 and aspartate 233. Aspartate 233 is a binding site for Mg(2+). Positions 341–349 are interaction with PCNA; it reads QQARLEGFF. Positions 344–395 are disordered; that stretch reads RLEGFFKPVPKTDAQKAAHKRKLEEKNEEKKKKLKQEKKDKAAAKSKPRGAA. The segment covering 365–386 has biased composition (basic and acidic residues); the sequence is KLEEKNEEKKKKLKQEKKDKAA.

Belongs to the XPG/RAD2 endonuclease family. FEN1 subfamily. In terms of assembly, interacts with PCNA. Three molecules of FEN1 bind to one PCNA trimer with each molecule binding to one PCNA monomer. PCNA stimulates the nuclease activity without altering cleavage specificity. Mg(2+) is required as a cofactor. Post-translationally, phosphorylated. Phosphorylation upon DNA damage induces relocalization to the nuclear plasma.

The protein localises to the nucleus. The protein resides in the nucleolus. Its subcellular location is the nucleoplasm. It is found in the mitochondrion. Functionally, structure-specific nuclease with 5'-flap endonuclease and 5'-3' exonuclease activities involved in DNA replication and repair. During DNA replication, cleaves the 5'-overhanging flap structure that is generated by displacement synthesis when DNA polymerase encounters the 5'-end of a downstream Okazaki fragment. It enters the flap from the 5'-end and then tracks to cleave the flap base, leaving a nick for ligation. Also involved in the long patch base excision repair (LP-BER) pathway, by cleaving within the apurinic/apyrimidinic (AP) site-terminated flap. Acts as a genome stabilization factor that prevents flaps from equilibrating into structures that lead to duplications and deletions. Also possesses 5'-3' exonuclease activity on nicked or gapped double-stranded DNA, and exhibits RNase H activity. Also involved in replication and repair of rDNA and in repairing mitochondrial DNA. The sequence is that of Flap endonuclease 1 from Fusarium vanettenii (strain ATCC MYA-4622 / CBS 123669 / FGSC 9596 / NRRL 45880 / 77-13-4) (Fusarium solani subsp. pisi).